A 109-amino-acid polypeptide reads, in one-letter code: Spermidine export protein MdtI (109 aa).

The next 4 helical transmembrane spans lie at 6–26, 36–56, 64–84, and 88–108; these read WIHGAWLGLAIMLEIAANVLL, CYGILSLAAVLAAFSALSQAV, AYALWGGFGIAATLAAGWVLF, and LNPKGWVGVILLLAGMVMIKF.

This sequence belongs to the drug/metabolite transporter (DMT) superfamily. Small multidrug resistance (SMR) (TC 2.A.7.1) family. MdtI subfamily. As to quaternary structure, forms a complex with MdtJ.

The protein resides in the cell inner membrane. Catalyzes the excretion of spermidine. The protein is Spermidine export protein MdtI of Salmonella choleraesuis (strain SC-B67).